A 129-amino-acid polypeptide reads, in one-letter code: Phosphoribosyl-AMP cyclohydrolase (129 aa).

Aspartate 76 contributes to the Mg(2+) binding site. A Zn(2+)-binding site is contributed by cysteine 77. Residues aspartate 78 and aspartate 80 each contribute to the Mg(2+) site. Positions 97 and 104 each coordinate Zn(2+).

This sequence belongs to the PRA-CH family. As to quaternary structure, homodimer. The cofactor is Mg(2+). Requires Zn(2+) as cofactor.

Its subcellular location is the cytoplasm. It catalyses the reaction 1-(5-phospho-beta-D-ribosyl)-5'-AMP + H2O = 1-(5-phospho-beta-D-ribosyl)-5-[(5-phospho-beta-D-ribosylamino)methylideneamino]imidazole-4-carboxamide. It functions in the pathway amino-acid biosynthesis; L-histidine biosynthesis; L-histidine from 5-phospho-alpha-D-ribose 1-diphosphate: step 3/9. Catalyzes the hydrolysis of the adenine ring of phosphoribosyl-AMP. The protein is Phosphoribosyl-AMP cyclohydrolase of Verminephrobacter eiseniae (strain EF01-2).